Here is a 161-residue protein sequence, read N- to C-terminus: uncharacterized protein (161 aa).

Belongs to the mimivirus L761/L899 family.

The protein resides in the virion. This is an uncharacterized protein from Acanthamoeba polyphaga (Amoeba).